Consider the following 329-residue polypeptide: Meiotic drive suppressor wtf21 (329 aa).

A disordered region spans residues 1–68 (MKNNYTSLKS…RENNPSRSTD (68 aa)). Residues 19–30 (KTDHEIDLEKGP) show a composition bias toward basic and acidic residues. 5 helical membrane passes run 73–95 (FLIK…ICYL), 110–132 (WTLF…YFYE), 165–182 (IIIW…FVYI), 192–214 (ALIC…VCIP), and 290–312 (GIAF…IRGA).

Belongs to the WTF family. In terms of assembly, homomer. Interacts with other proteins that exhibit high sequence similarity.

It is found in the spore membrane. The protein localises to the vacuole membrane. Acts as a suppressor component of the dual wtf meiotic drive system, and can suppress but not confer meiotic drive by compatible poisons. Wtf meiotic drive systems promote unequal transmission of alleles from the parental zygote to progeny spores by encoding a poison and an antidote from the same locus; the poison is trans-acting and forms toxic aggregates in all spores within an ascus, wherease the antidote is spore-specific and targets aggregates for degradation by the vacuole. Meiotic drive by wtf systems therefore lead to poisoning of all progeny that do not inherit the dual poison/antidote allele, or express a compatible antidote. The chain is Meiotic drive suppressor wtf21 from Schizosaccharomyces pombe (strain 972 / ATCC 24843) (Fission yeast).